The chain runs to 94 residues: uncharacterized protein (94 aa).

2 helical membrane-spanning segments follow: residues 9-29 (TLAK…FFST) and 34-54 (LIEL…VFIV).

It is found in the cell membrane. This is an uncharacterized protein from Bacillus subtilis (strain 168).